We begin with the raw amino-acid sequence, 485 residues long: MQIYNSLSRRKELFTPAVPGKVNMYVCGITAYDLCHIGHARSAVVFDVLVRYLRHTGLDVTFARNFTDVDDKIIKRANEEGLTSQQVAEKYIDTFYEDMDRLNVLRADIEPKATGHILEMIALCEKLIAKGKAYATPSGDVYFRVRSFPEYGKLSGRDIDDMRSGARVAPGEEKEDPLDFALWKAAKPGEPSWTSPWGEGRPGWHIECSAMSEKHMPLPLDIHGGGQDLIFPHHENEIAQTEAALDKPFVRYWMHNGFVQVDAEKMSKSLGNFKTIRDILEGYLPEVLRFFLLTKHYRSPIDFTFDSMDEAEKSLKRIYEALSLARTERSRSKWSATPLPADVTAEFDTLDRAFDEALEDDLNTAAALGHVFGTIRLVNRLLEDKNLRKSAETLALLERLDGLVAKWMKVLGVFGREPEAFLSDLKECRIRRKGIDTTKVDALLEERKSVRAAKDFARADAIRDELAALGIEVRDTPSGAVWDVL.

C27 contributes to the Zn(2+) binding site. The 'HIGH' region signature appears at 29–39 (ITAYDLCHIGH). 3 residues coordinate Zn(2+): C208, H233, and E237. The 'KMSKS' region signature appears at 265 to 269 (KMSKS). K268 is a binding site for ATP.

This sequence belongs to the class-I aminoacyl-tRNA synthetase family. As to quaternary structure, monomer. It depends on Zn(2+) as a cofactor.

It localises to the cytoplasm. The enzyme catalyses tRNA(Cys) + L-cysteine + ATP = L-cysteinyl-tRNA(Cys) + AMP + diphosphate. This Nitratidesulfovibrio vulgaris (strain ATCC 29579 / DSM 644 / CCUG 34227 / NCIMB 8303 / VKM B-1760 / Hildenborough) (Desulfovibrio vulgaris) protein is Cysteine--tRNA ligase.